Reading from the N-terminus, the 565-residue chain is Urocanate hydratase (565 aa).

NAD(+)-binding positions include G58 to G59, Q136, G182 to G184, E202, R207, N245 to A246, Q266 to H270, Y276 to L277, and Y325. C413 is an active-site residue. G495 serves as a coordination point for NAD(+).

The protein belongs to the urocanase family. NAD(+) is required as a cofactor.

It is found in the cytoplasm. It catalyses the reaction 4-imidazolone-5-propanoate = trans-urocanate + H2O. Its pathway is amino-acid degradation; L-histidine degradation into L-glutamate; N-formimidoyl-L-glutamate from L-histidine: step 2/3. Catalyzes the conversion of urocanate to 4-imidazolone-5-propionate. The polypeptide is Urocanate hydratase (Vibrio vulnificus (strain CMCP6)).